Consider the following 309-residue polypeptide: DSC E3 ubiquitin ligase complex subunit C (309 aa).

Residue Asn-61 is glycosylated (N-linked (GlcNAc...) asparagine). Disordered stretches follow at residues 88-110 (LPPSPSRTPVVQEDATTVKGKGK) and 148-177 (EQADEDYTGRKKQQQPPPSTTSAPRGFDRL). 2 helical membrane passes run 257-277 (DDMLWGAVMGFFWPVGCAMWL) and 289-309 (GLAVFVGVVINVAFGAMRIMN).

This sequence belongs to the dsc3 family. Component of the DSC E3 ubiquitin ligase complex composed of dscA, dscB, dscC and dscD.

Its subcellular location is the endoplasmic reticulum membrane. It participates in protein modification; protein ubiquitination. In terms of biological role, component of the DSC E3 ubiquitin ligase complex which is required for the srbA transcriptional activator proteolytic cleavage to release the soluble transcription factor from the membrane in low oxygen or sterol conditions. Required for growth during hypoxia and triazole drug susceptibility, as well as for virulence in a murine model of invasive pulmonary aspergillosis (IPA). The polypeptide is DSC E3 ubiquitin ligase complex subunit C (Aspergillus fumigatus (strain ATCC MYA-4609 / CBS 101355 / FGSC A1100 / Af293) (Neosartorya fumigata)).